A 255-amino-acid polypeptide reads, in one-letter code: 4-hydroxy-tetrahydrodipicolinate reductase (255 aa).

NAD(+) is bound by residues 9–14 (GFKGKM), 89–91 (GTT), and 115–118 (APNF). The Proton donor/acceptor role is filled by histidine 145. Histidine 146 contacts (S)-2,3,4,5-tetrahydrodipicolinate. Lysine 149 serves as the catalytic Proton donor. 155–156 (GT) contributes to the (S)-2,3,4,5-tetrahydrodipicolinate binding site.

It belongs to the DapB family.

It localises to the cytoplasm. It catalyses the reaction (S)-2,3,4,5-tetrahydrodipicolinate + NAD(+) + H2O = (2S,4S)-4-hydroxy-2,3,4,5-tetrahydrodipicolinate + NADH + H(+). The enzyme catalyses (S)-2,3,4,5-tetrahydrodipicolinate + NADP(+) + H2O = (2S,4S)-4-hydroxy-2,3,4,5-tetrahydrodipicolinate + NADPH + H(+). It participates in amino-acid biosynthesis; L-lysine biosynthesis via DAP pathway; (S)-tetrahydrodipicolinate from L-aspartate: step 4/4. Catalyzes the conversion of 4-hydroxy-tetrahydrodipicolinate (HTPA) to tetrahydrodipicolinate. In Streptococcus suis (strain 98HAH33), this protein is 4-hydroxy-tetrahydrodipicolinate reductase.